Reading from the N-terminus, the 501-residue chain is MKTLISSSLSHKSQCLTICFKLNKLAMVYYTREFQTEASQTSASGSMFSGNATTILRRMLAEKRIGRFQVENQRKTEKLDKTLKGLCVTGRLKEAVGLLWSSGLQVEPETYAVLLQECKQRKEYTKGKRIHAQMFVVGFALNEYLKVKLLILYALSGDLQTAGILFRSLKIRDLIPWNAMISGYVQKGLEQEGLFIYYDMRQNRIVPDQYTFASVFRACSALDRLEHGKRAHAVMIKRCIKSNIIVDSALVDMYFKCSSFSDGHRVFDQLSTRNVITWTSLISGYGYHGKVSEVLKCFEKMKEEGCRPNPVTFLVVLTACNHGGLVDKGWEHFYSMKRDYGIEPEGQHYAAMVDTLGRAGRLQEAYEFVMKSPCKEHPPVWGSLLGACRIHGNVKLLELAATKFLELDPTNGGNYVVFANGYASCGLREAASKVRRKMENAGVKKDPGYSQIELQGEVHRFMKDDTSHRLSEKIYKKVHEMTSFFMDIDYYPDGLDSSCPV.

8 PPR repeats span residues 107–141 (EPET…GFAL), 142–172 (NEYL…LKIR), 173–207 (DLIP…RIVP), 208–242 (DQYT…CIKS), 243–273 (NIIV…LSTR), 274–308 (NVIT…GCRP), 309–344 (NPVT…GIEP), and 345–379 (EGQH…EHPP). Positions 380 to 455 (VWGSLLGACR…DPGYSQIELQ (76 aa)) are type E motif. The type E(+) motif stretch occupies residues 456-486 (GEVHRFMKDDTSHRLSEKIYKKVHEMTSFFM).

The protein belongs to the PPR family. PCMP-E subfamily.

This Arabidopsis thaliana (Mouse-ear cress) protein is Pentatricopeptide repeat-containing protein At4g16470 (PCMP-E12).